A 317-amino-acid polypeptide reads, in one-letter code: tRNA dimethylallyltransferase (317 aa).

14–21 (GPTAVGKT) contributes to the ATP binding site. 16–21 (TAVGKT) lines the substrate pocket. Positions 39-42 (DSMQ) are interaction with substrate tRNA.

It belongs to the IPP transferase family. In terms of assembly, monomer. The cofactor is Mg(2+).

It catalyses the reaction adenosine(37) in tRNA + dimethylallyl diphosphate = N(6)-dimethylallyladenosine(37) in tRNA + diphosphate. Its function is as follows. Catalyzes the transfer of a dimethylallyl group onto the adenine at position 37 in tRNAs that read codons beginning with uridine, leading to the formation of N6-(dimethylallyl)adenosine (i(6)A). The chain is tRNA dimethylallyltransferase from Bacillus cereus (strain AH187).